We begin with the raw amino-acid sequence, 468 residues long: 3-isopropylmalate dehydratase large subunit (468 aa).

Cys-349, Cys-409, and Cys-412 together coordinate [4Fe-4S] cluster.

Belongs to the aconitase/IPM isomerase family. LeuC type 1 subfamily. As to quaternary structure, heterodimer of LeuC and LeuD. [4Fe-4S] cluster is required as a cofactor.

It carries out the reaction (2R,3S)-3-isopropylmalate = (2S)-2-isopropylmalate. It functions in the pathway amino-acid biosynthesis; L-leucine biosynthesis; L-leucine from 3-methyl-2-oxobutanoate: step 2/4. Functionally, catalyzes the isomerization between 2-isopropylmalate and 3-isopropylmalate, via the formation of 2-isopropylmaleate. The polypeptide is 3-isopropylmalate dehydratase large subunit (Shewanella baltica (strain OS155 / ATCC BAA-1091)).